The primary structure comprises 450 residues: Probable ECA polymerase (450 aa).

The next 11 membrane-spanning stretches (helical) occupy residues F6–F26, V37–L57, V63–A83, V118–L138, G155–L175, A181–G201, I207–W227, M228–Y248, L341–I361, Y378–A398, and V410–F430.

It belongs to the WzyE family. As to quaternary structure, probably part of a complex composed of WzxE, WzyE and WzzE.

It localises to the cell inner membrane. It participates in bacterial outer membrane biogenesis; enterobacterial common antigen biosynthesis. Functionally, probably involved in the polymerization of enterobacterial common antigen (ECA) trisaccharide repeat units. The protein is Probable ECA polymerase of Shigella boydii serotype 18 (strain CDC 3083-94 / BS512).